Reading from the N-terminus, the 286-residue chain is Cytotoxin (286 aa).

Positions 267 to 286 (TFYNYASLVPDLETRVRSAE) are excised as a propeptide.

The protein belongs to the aerolysin family.

It localises to the secreted. Its function is as follows. Cytotoxin is thought to form hydrophilic pores in cell membranes. The protein is Cytotoxin (ctx) of Pseudomonas aeruginosa.